Reading from the N-terminus, the 262-residue chain is Pyridoxine 5'-phosphate synthase (262 aa).

Asn-6 contacts 3-amino-2-oxopropyl phosphate. Asp-8–His-9 contacts 1-deoxy-D-xylulose 5-phosphate. 3-amino-2-oxopropyl phosphate is bound at residue Arg-17. His-43 serves as the catalytic Proton acceptor. The 1-deoxy-D-xylulose 5-phosphate site is built by Arg-45 and His-50. Catalysis depends on Glu-70, which acts as the Proton acceptor. Thr-102 serves as a coordination point for 1-deoxy-D-xylulose 5-phosphate. The active-site Proton donor is the His-215. 3-amino-2-oxopropyl phosphate contacts are provided by residues Gly-216 and Gly-237–His-238.

This sequence belongs to the PNP synthase family. In terms of assembly, homooctamer; tetramer of dimers.

The protein localises to the cytoplasm. It catalyses the reaction 3-amino-2-oxopropyl phosphate + 1-deoxy-D-xylulose 5-phosphate = pyridoxine 5'-phosphate + phosphate + 2 H2O + H(+). The protein operates within cofactor biosynthesis; pyridoxine 5'-phosphate biosynthesis; pyridoxine 5'-phosphate from D-erythrose 4-phosphate: step 5/5. Functionally, catalyzes the complicated ring closure reaction between the two acyclic compounds 1-deoxy-D-xylulose-5-phosphate (DXP) and 3-amino-2-oxopropyl phosphate (1-amino-acetone-3-phosphate or AAP) to form pyridoxine 5'-phosphate (PNP) and inorganic phosphate. This is Pyridoxine 5'-phosphate synthase from Helicobacter pylori (strain Shi470).